We begin with the raw amino-acid sequence, 1527 residues long: DNA-directed RNA polymerase subunit beta'' (1527 aa).

Residues cysteine 220, cysteine 296, cysteine 303, and cysteine 306 each contribute to the Zn(2+) site. 2 stretches are compositionally biased toward basic and acidic residues: residues 644–661 and 671–681; these read RTQE…RTRE and PENKYRTREGE. 2 disordered regions span residues 644-681 and 712-793; these read RTQE…REGE and YRTL…KKEG. Composition is skewed to acidic residues over residues 737–755 and 763–786; these read GEYE…SSED and TLEE…PEED.

Belongs to the RNA polymerase beta' chain family. RpoC2 subfamily. In plastids the minimal PEP RNA polymerase catalytic core is composed of four subunits: alpha, beta, beta', and beta''. When a (nuclear-encoded) sigma factor is associated with the core the holoenzyme is formed, which can initiate transcription. The cofactor is Zn(2+).

It is found in the plastid. The protein localises to the chloroplast. It carries out the reaction RNA(n) + a ribonucleoside 5'-triphosphate = RNA(n+1) + diphosphate. In terms of biological role, DNA-dependent RNA polymerase catalyzes the transcription of DNA into RNA using the four ribonucleoside triphosphates as substrates. The chain is DNA-directed RNA polymerase subunit beta'' from Zea mays (Maize).